A 294-amino-acid chain; its full sequence is Glyceraldehyde-3-phosphate dehydrogenase (294 aa).

The NAD(+) site is built by D19, R63, and T105. Residues 134-136 (SCT) and T165 contribute to the D-glyceraldehyde 3-phosphate site. Catalysis depends on C135, which acts as the Nucleophile. Residues 169 to 188 (KTVDGPSHKDWRGGRGASQN) form a disordered region. D-glyceraldehyde 3-phosphate is bound by residues 194-195 (TG) and R217.

The protein belongs to the glyceraldehyde-3-phosphate dehydrogenase family. In terms of assembly, homotetramer.

Its subcellular location is the cytoplasm. The enzyme catalyses D-glyceraldehyde 3-phosphate + phosphate + NAD(+) = (2R)-3-phospho-glyceroyl phosphate + NADH + H(+). Its pathway is carbohydrate degradation; glycolysis; pyruvate from D-glyceraldehyde 3-phosphate: step 1/5. Functionally, catalyzes the oxidative phosphorylation of glyceraldehyde 3-phosphate (G3P) to 1,3-bisphosphoglycerate (BPG) using the cofactor NAD. The first reaction step involves the formation of a hemiacetal intermediate between G3P and a cysteine residue, and this hemiacetal intermediate is then oxidized to a thioester, with concomitant reduction of NAD to NADH. The reduced NADH is then exchanged with the second NAD, and the thioester is attacked by a nucleophilic inorganic phosphate to produce BPG. The chain is Glyceraldehyde-3-phosphate dehydrogenase (gap) from Citrobacter freundii.